A 1120-amino-acid polypeptide reads, in one-letter code: ELKS/Rab6-interacting/CAST family member 1 (1120 aa).

The tract at residues 1–54 (MYGSARSVGKVEPSSQSPGRSPRLPRSPRLGHRRTNSTGGSSGNSVGGGSGKTL) is disordered. Lys10 is subject to N6-acetyllysine. The span at 13 to 28 (PSSQSPGRSPRLPRSP) shows a compositional bias: low complexity. Residues Ser17, Ser21, and Ser37 each carry the phosphoserine modification. At Thr38 the chain carries Phosphothreonine. The segment covering 40-51 (GSSGNSVGGGSG) has biased composition (gly residues). A phosphoserine mark is found at Ser55, Ser75, Ser94, Ser824, Leu965, and Ser1009. Positions 144-992 (RQARDNTIMD…RMKLMADNYE (849 aa)) form a coiled coil. The segment covering 801-824 (KHKEQVEKKKSAQMLEEARRREDS) has biased composition (basic and acidic residues). The tract at residues 801–840 (KHKEQVEKKKSAQMLEEARRREDSLSDSSQQLQDSLRKKD) is disordered. Thr1050 is subject to Phosphothreonine. The FIP-RBD domain maps to 1050–1112 (TPPASYNADG…DHCPDILEQV (63 aa)). Residues 1060–1104 (EQAAWENELQQMTQEQLQNELEKVEGDNAELQEFANTILQQIADH) adopt a coiled-coil conformation.

In terms of assembly, interacts with the GTB-bound forms of RAB6A isoform 1 and isoform 2 and with RAB6B. The interaction was strongest with RAB6B, followed by RAB6A isoform 2 and weakest with RAB6A isoform 1. Part of a complex with CHUK, IKBKB and IKBKG. Interacts with CHUK, IKBKB and IKBKG. The interaction with IKBKG is independent of CHUK and IKBKB. Interacts with NFKBIA. Isoform 2 interacts through its C-terminus with the PDZ domains of RIMS1 and RIMS2. Interacts with ERC2/CAST1. Interacts with SDCCAG8. Part of a cortical microtubule stabilization complex (CMSC) composed of KANK1, PPFIA1, PPFIBP1, ERC1/ELKS, PHLDB2/LL5beta, CLASPs, KIF21A and possibly additional interactors; within CMSCs KANK1 and PHLDB2/LL5beta appear to be the core components for targeting of microtubule-binding proteins KIF21A and CLASPs, whereas PPFIA1, PPFIBP1 and ERC1/ELKS serve as scaffolds for protein clustering. In terms of tissue distribution, widely expressed.

Its subcellular location is the cytoplasm. The protein resides in the cytoskeleton. The protein localises to the microtubule organizing center. It is found in the centrosome. It localises to the membrane. Its subcellular location is the golgi apparatus membrane. The protein resides in the presynaptic active zone. The protein localises to the cell projection. It is found in the podosome. In terms of biological role, regulatory subunit of the IKK complex. Probably recruits IkappaBalpha/NFKBIA to the complex. May be involved in the organization of the cytomatrix at the nerve terminals active zone (CAZ) which regulates neurotransmitter release. May be involved in vesicle trafficking at the CAZ. May be involved in Rab-6 regulated endosomes to Golgi transport. In Mus musculus (Mouse), this protein is ELKS/Rab6-interacting/CAST family member 1.